A 266-amino-acid polypeptide reads, in one-letter code: 15-hydroxyprostaglandin dehydrogenase [NAD(+)] (266 aa).

Residues 12-20 (GAAQGIGRA), 36-37 (DW), 63-65 (CDV), and asparagine 91 contribute to the NAD(+) site. Substrate contacts are provided by serine 138 and glutamine 148. Residue tyrosine 151 is the Proton acceptor of the active site. NAD(+) is bound by residues 151 to 155 (YCASK) and 186 to 188 (VNT).

Belongs to the short-chain dehydrogenases/reductases (SDR) family. Homodimer. As to expression, detected in colon epithelium (at protein level).

It localises to the cytoplasm. The enzyme catalyses prostaglandin E2 + NAD(+) = 15-oxoprostaglandin E2 + NADH + H(+). It carries out the reaction (15S)-hydroxy-(5Z,8Z,11Z,13E)-eicosatetraenoate + NAD(+) = 15-oxo-(5Z,8Z,11Z,13E)-eicosatetraenoate + NADH + H(+). It catalyses the reaction (11R)-hydroxy-(5Z,8Z,12E,14Z)-eicosatetraenoate + NAD(+) = 11-oxo-(5Z,8Z,12E,14Z)-eicosatetraenoate + NADH + H(+). The catalysed reaction is lipoxin A4 + NAD(+) = 15-oxo-(5S,6R)-dihydroxy-(7E,9E,11Z,13E)-eicosatetraenoate + NADH + H(+). The enzyme catalyses 15-oxo-(5S,6R)-dihydroxy-(7E,9E,11Z)-eicosatrienoate + NADH + H(+) = (5S,6R,15S)-trihydroxy-(7E,9E,11Z)-eicosatrienoate + NAD(+). It carries out the reaction prostaglandin A1 + NAD(+) = 15-oxo-prostaglandin A1 + NADH + H(+). It catalyses the reaction prostaglandin E1 + NAD(+) = 15-oxoprostaglandin E1 + NADH + H(+). The catalysed reaction is 14-hydroxy-(4Z,7Z,10Z,12E,16Z,19Z)-docosahexaenoate + NAD(+) = 14-oxo-(4Z,7Z,10Z,12E,16Z,19Z)-docosahexaenoate + NADH + H(+). The enzyme catalyses resolvin E1 + NAD(+) = 18-oxo-resolvin E1 + NADH + H(+). It carries out the reaction resolvin D1 + NAD(+) = 8-oxoresolvin D1 + NADH + H(+). It catalyses the reaction resolvin D1 + NAD(+) = 17-oxoresolvin D1 + NADH + H(+). The catalysed reaction is resolvin D2 + NAD(+) = 7-oxoresolvin D2 + NADH + H(+). The enzyme catalyses resolvin D2 + NAD(+) = 16-oxoresolvin D2 + NADH + H(+). Catalyzes the NAD-dependent dehydrogenation (oxidation) of a broad array of hydroxylated polyunsaturated fatty acids (mainly eicosanoids and docosanoids, including prostaglandins, lipoxins and resolvins), yielding their corresponding keto (oxo) metabolites. Decreases the levels of the pro-proliferative prostaglandins such as prostaglandin E2 (whose activity is increased in cancer because of an increase in the expression of cyclooxygenase 2) and generates oxo-fatty acid products that can profoundly influence cell function by abrogating pro-inflammatory cytokine expression. Converts resolvins E1, D1 and D2 to their oxo products, which represents a mode of resolvin inactivation. Resolvin E1 plays important roles during the resolution phase of acute inflammation, while resolvins D1 and D2 have a unique role in obesity-induced adipose inflammation. The sequence is that of 15-hydroxyprostaglandin dehydrogenase [NAD(+)] from Homo sapiens (Human).